The chain runs to 381 residues: 3-dehydroquinate synthase (381 aa).

NAD(+) is bound by residues 81–86 (EGESSK), 115–119 (GVIGD), 139–140 (TS), K152, and K161. Positions 194, 256, and 274 each coordinate Zn(2+).

Belongs to the sugar phosphate cyclases superfamily. Dehydroquinate synthase family. It depends on Co(2+) as a cofactor. Zn(2+) serves as cofactor. NAD(+) is required as a cofactor.

The protein resides in the cytoplasm. It carries out the reaction 7-phospho-2-dehydro-3-deoxy-D-arabino-heptonate = 3-dehydroquinate + phosphate. Its pathway is metabolic intermediate biosynthesis; chorismate biosynthesis; chorismate from D-erythrose 4-phosphate and phosphoenolpyruvate: step 2/7. Catalyzes the conversion of 3-deoxy-D-arabino-heptulosonate 7-phosphate (DAHP) to dehydroquinate (DHQ). In Rhodopseudomonas palustris (strain TIE-1), this protein is 3-dehydroquinate synthase.